A 3218-amino-acid polypeptide reads, in one-letter code: Serine/threonine-protein kinase Smg1 (3218 aa).

The tract at residues 32-78 is disordered; sequence LNNNGNHGDSSNEGGGGNGSGRGGATGSGNIAGLGGSESMWSPGGGK. The span at 33–43 shows a compositional bias: low complexity; that stretch reads NNNGNHGDSSN. The span at 44–67 shows a compositional bias: gly residues; that stretch reads EGGGGNGSGRGGATGSGNIAGLGG. At Ser-70 the chain carries Phosphoserine. An FAT domain is found at 1289 to 1692; that stretch reads DAAAAAREEG…IFPAVVGANR (404 aa). The HEAT repeat unit spans residues 1643–1678; the sequence is APWKVIIPQLFSRLNHHEPYVRKSVCDLLCRLAKSR. Residues 1897–2232 form the PI3K/PI4K catalytic domain; the sequence is VESSVCVLPT…LGVGDLKYHK (336 aa). The segment at 1903–1909 is G-loop; that stretch reads VLPTKTK. Residues 2101–2109 are catalytic loop; it reads GLGDRHLDN. The tract at residues 2121–2145 is activation loop; that stretch reads HIDYNVCFEKGRTLRIPEKVPFRLT. The 33-residue stretch at 3186–3218 folds into the FATC domain; the sequence is QRSTVAEQVDYVIREACNPENLAVLYEGWTPWV.

It belongs to the PI3/PI4-kinase family. As to quaternary structure, component of a post-splicing multiprotein NMD complex. Mn(2+) serves as cofactor.

It localises to the cytoplasm. The enzyme catalyses L-seryl-[protein] + ATP = O-phospho-L-seryl-[protein] + ADP + H(+). The catalysed reaction is L-threonyl-[protein] + ATP = O-phospho-L-threonyl-[protein] + ADP + H(+). Serine/threonine protein kinase involved in mRNA surveillance. Recognizes the substrate consensus sequence [ST]-Q. Involved in nonsense-mediated decay (NMD) of mRNAs containing premature stop codons, probably by phosphorylating Upf1. This is Serine/threonine-protein kinase Smg1 (nonC) from Drosophila melanogaster (Fruit fly).